An 87-amino-acid polypeptide reads, in one-letter code: uncharacterized protein (87 aa).

Residues 1-19 (MLVLQLAVLVTAVYAFVHA) form the signal peptide. A helical transmembrane segment spans residues 51-71 (ILGFVFGVLGIVIAACAAGVY).

To M.tuberculosis Rv0476.

Its subcellular location is the membrane. This is an uncharacterized protein from Mycobacterium leprae (strain TN).